We begin with the raw amino-acid sequence, 470 residues long: Xaa-Pro aminopeptidase 2 (470 aa).

Positions 287, 299, 382, 413, and 437 each coordinate Mn(2+).

The protein belongs to the peptidase M24B family. In terms of assembly, homodimer. Requires Mn(2+) as cofactor.

It catalyses the reaction Release of any N-terminal amino acid, including proline, that is linked to proline, even from a dipeptide or tripeptide.. The sequence is that of Xaa-Pro aminopeptidase 2 (pepP2) from Streptomyces coelicolor (strain ATCC BAA-471 / A3(2) / M145).